We begin with the raw amino-acid sequence, 947 residues long: Bifunctional glutamine synthetase adenylyltransferase/adenylyl-removing enzyme (947 aa).

The adenylyl removase stretch occupies residues 1–440 (MTPLSSPLSQ…VFNELIGDDE (440 aa)). The interval 450–947 (SEPWREVWQD…ASWRKWLVAV (498 aa)) is adenylyl transferase.

Belongs to the GlnE family. It depends on Mg(2+) as a cofactor.

It carries out the reaction [glutamine synthetase]-O(4)-(5'-adenylyl)-L-tyrosine + phosphate = [glutamine synthetase]-L-tyrosine + ADP. The catalysed reaction is [glutamine synthetase]-L-tyrosine + ATP = [glutamine synthetase]-O(4)-(5'-adenylyl)-L-tyrosine + diphosphate. In terms of biological role, involved in the regulation of glutamine synthetase GlnA, a key enzyme in the process to assimilate ammonia. When cellular nitrogen levels are high, the C-terminal adenylyl transferase (AT) inactivates GlnA by covalent transfer of an adenylyl group from ATP to specific tyrosine residue of GlnA, thus reducing its activity. Conversely, when nitrogen levels are low, the N-terminal adenylyl removase (AR) activates GlnA by removing the adenylyl group by phosphorolysis, increasing its activity. The regulatory region of GlnE binds the signal transduction protein PII (GlnB) which indicates the nitrogen status of the cell. The chain is Bifunctional glutamine synthetase adenylyltransferase/adenylyl-removing enzyme from Salmonella gallinarum (strain 287/91 / NCTC 13346).